Reading from the N-terminus, the 504-residue chain is Hexose transporter 1 (504 aa).

Topologically, residues 1-29 are cytoplasmic; sequence MTKSSKDICSENEGKKNGKSGFFSTSFKY. The chain crosses the membrane as a helical span at residues 30–50; that stretch reads VLSACIASFIFGYQVSVLNTI. Over 51–78 the chain is Extracellular; the sequence is KNFIVVEFEWCKGEKDRLNCSNNTIQSS. Cys-61 and Cys-70 are oxidised to a cystine. A helical transmembrane segment spans residues 79–99; the sequence is FLLASVFIGAVLGCGFSGYLV. Residues 100 to 104 lie on the Cytoplasmic side of the membrane; that stretch reads QFGRR. A helical transmembrane segment spans residues 105-125; sequence LSLLIIYNFFFLVSILTSITH. At 126-129 the chain is on the extracellular side; it reads HFHT. A helical transmembrane segment spans residues 130-150; that stretch reads ILFARLLSGFGIGLVTVSVPM. Topologically, residues 151–165 are cytoplasmic; sequence YISEMTHKDKKGAYG. The helical transmembrane segment at 166 to 186 threads the bilayer; that stretch reads VMHQLFITFGIFVAVMLGLAM. Gln-169 is a binding site for alpha-D-glucose. Gln-169 serves as a coordination point for beta-D-glucose. The Extracellular portion of the chain corresponds to 187–207; the sequence is GEGPKADSTEPLTSFAKLWWR. Residues 208–228 traverse the membrane as a helical segment; it reads LMFLFPSVISLIGILALVVFF. Topologically, residues 229–293 are cytoplasmic; the sequence is KEETPYFLFE…SALKIPSYRY (65 aa). The chain crosses the membrane as a helical span at residues 294 to 314; sequence VIILGCLLSGLQQFTGINVLV. Alpha-D-glucose contacts are provided by Gln-305, Gln-306, and Asn-311. Gln-305 is a beta-D-glucose binding site. Asn-311 is a beta-D-glucose binding site. Residues 315–331 are Extracellular-facing; sequence SNSNELYKEFLDSHLIT. Residues 332 to 352 traverse the membrane as a helical segment; it reads ILSVVMTAVNFLMTFPAIYIV. Position 341 (Asn-341) interacts with beta-D-glucose. Residues 353–358 are Cytoplasmic-facing; that stretch reads EKLGRK. The helical transmembrane segment at 359–379 threads the bilayer; sequence TLLLWGCVGVLVAYLPTAIAN. Residues 380–392 lie on the Extracellular side of the membrane; sequence EINRNSNFVKILS. Residues 393-413 traverse the membrane as a helical segment; sequence IVATFVMIISFAVSYGPVLWI. Trp-412 contacts alpha-D-glucose. Residues 414 to 429 are Cytoplasmic-facing; that stretch reads YLHEMFPSEIKDSAAS. The helical transmembrane segment at 430 to 450 threads the bilayer; it reads LASLVNWVCAIIVVFPSDIII. The Extracellular portion of the chain corresponds to 451 to 455; it reads KKSPS. The helical transmembrane segment at 456-476 threads the bilayer; it reads ILFIVFSVMSILTFFFIFFFI. The Cytoplasmic segment spans residues 477–504; sequence KETKGGEIGTSPYITMEERQKHMTKSVV.

The protein belongs to the major facilitator superfamily. Sugar transporter (TC 2.A.1.1) family. As to quaternary structure, homodimer.

The protein resides in the cell membrane. The enzyme catalyses D-glucose(out) = D-glucose(in). It carries out the reaction D-fructose(out) = D-fructose(in). The catalysed reaction is D-galactose(in) = D-galactose(out). It catalyses the reaction D-mannose(out) = D-mannose(in). The enzyme catalyses D-glucosamine(out) = D-glucosamine(in). It carries out the reaction D-xylose(out) = D-xylose(in). Inhibited by cytochalasin B. Inhibited by compound 3361 (3-O-((undec-10-en)-1-yl)-D-glucose). Inhibited by compound HTI-1. Functionally, sodium-independent facilitative hexose transporter. Can transport D-glucose and D-fructose. Can transport D-mannose, D-galactose, D-xylose and D-glucosamine. The chain is Hexose transporter 1 from Plasmodium falciparum (isolate 3D7).